Reading from the N-terminus, the 331-residue chain is Aflatoxin B1 aldehyde reductase member 4 (331 aa).

An NADP(+)-binding site is contributed by aspartate 44. Tyrosine 49 acts as the Proton donor in catalysis. At serine 85 the chain carries Phosphoserine. Substrate is bound at residue histidine 113. Residues 143–144 (SN), glutamine 169, 198–208 (NPLAGGLLTGK), and arginine 222 contribute to the NADP(+) site. Substrate is bound at residue tyrosine 232. 290–298 (SSLEQLEQN) contacts NADP(+).

This sequence belongs to the aldo/keto reductase family. Aldo/keto reductase 2 subfamily. Mainly expressed in uterus.

Its function is as follows. Can reduce the dialdehyde protein-binding form of aflatoxin B1 (AFB1) to the non-binding AFB1 dialcohol. May be involved in protection of liver against the toxic and carcinogenic effects of AFB1, a potent hepatocarcinogen. This Homo sapiens (Human) protein is Aflatoxin B1 aldehyde reductase member 4 (AKR7L).